The sequence spans 67 residues: Large ribosomal subunit protein uL29 (67 aa).

It belongs to the universal ribosomal protein uL29 family.

This Rubrobacter xylanophilus (strain DSM 9941 / JCM 11954 / NBRC 16129 / PRD-1) protein is Large ribosomal subunit protein uL29.